We begin with the raw amino-acid sequence, 118 residues long: Small ribosomal subunit protein uS13 (118 aa).

Residues 94–118 (GLPVRGQRTKTNARTRKGPRKPIRK) form a disordered region.

It belongs to the universal ribosomal protein uS13 family. Part of the 30S ribosomal subunit. Forms a loose heterodimer with protein S19. Forms two bridges to the 50S subunit in the 70S ribosome.

In terms of biological role, located at the top of the head of the 30S subunit, it contacts several helices of the 16S rRNA. In the 70S ribosome it contacts the 23S rRNA (bridge B1a) and protein L5 of the 50S subunit (bridge B1b), connecting the 2 subunits; these bridges are implicated in subunit movement. Contacts the tRNAs in the A and P-sites. In Pseudomonas aeruginosa (strain LESB58), this protein is Small ribosomal subunit protein uS13.